Reading from the N-terminus, the 994-residue chain is Integrator complex subunit 5 (994 aa).

The tract at residues 559 to 586 (NSNNNNELCNGKDYGKRTKLEPGEDKVD) is disordered. Over residues 571 to 583 (DYGKRTKLEPGED) the composition is skewed to basic and acidic residues. Transmembrane regions (helical) follow at residues 769 to 786 (YSLVSLLLVELVSTDVMY) and 810 to 826 (AFINSPVLWAVLGLIAG).

Belongs to the Integrator subunit 5 family. As to quaternary structure, belongs to the multiprotein complex Integrator, at least composed of IntS1, IntS2, IntS3, IntS4, omd/IntS5, IntS6, defl/IntS7, IntS8, IntS9, IntS10, IntS11, IntS12, asun/IntS13, IntS14 and IntS15. The core complex associates with protein phosphatase 2A subunits mts/PP2A and Pp2A-29B, to form the Integrator-PP2A (INTAC) complex.

It localises to the nucleus membrane. Its subcellular location is the nucleus. It is found in the cytoplasm. Functionally, component of the integrator complex, a multiprotein complex that terminates RNA polymerase II (Pol II) transcription in the promoter-proximal region of genes. The integrator complex provides a quality checkpoint during transcription elongation by driving premature transcription termination of transcripts that are unfavorably configured for transcriptional elongation: the complex terminates transcription by (1) catalyzing dephosphorylation of the C-terminal domain (CTD) of Pol II subunit Polr2A/Rbp1 and Spt5, and (2) degrading the exiting nascent RNA transcript via endonuclease activity. The integrator complex is also involved in the 3'-end processing of the U7 snRNA, and also the spliceosomal snRNAs U1, U2, U4 and U5. The sequence is that of Integrator complex subunit 5 from Drosophila melanogaster (Fruit fly).